We begin with the raw amino-acid sequence, 261 residues long: Cytochrome c oxidase subunit 3 (261 aa).

The Mitochondrial matrix portion of the chain corresponds to 1–15 (MAHQAHAYHMVDPSP). A helical membrane pass occupies residues 16–34 (WPLTGAIAALLLTSGTAVW). The Mitochondrial intermembrane segment spans residues 35–40 (FHFHSL). Residues 41-66 (TLLTLGNILLLLTMYQWWRDIIREGT) traverse the membrane as a helical segment. Residues 67–72 (FQGHHT) are Mitochondrial matrix-facing. A helical membrane pass occupies residues 73 to 105 (PPVQKGLRYGMILFITSEVFFFLGFFWAFYHAS). Over 106–128 (LAPTPELGGCWPPTGITTLDPFE) the chain is Mitochondrial intermembrane. A helical transmembrane segment spans residues 129 to 152 (VPLLNTAVLLASGVTVTWAHHSIM). Residues 153-155 (EGE) are Mitochondrial matrix-facing. Residues 156 to 183 (RKQTIQALTLTILLGFYFTFLQGMEYYE) form a helical membrane-spanning segment. Residues 184-190 (APFTIAD) lie on the Mitochondrial intermembrane side of the membrane. Residues 191 to 223 (GVYGSTFFVATGFHGLHVIIGSTFLAVCLLRQV) traverse the membrane as a helical segment. Over 224–232 (QYHFTSEHH) the chain is Mitochondrial matrix. Residues 233 to 256 (FGFEAAAWYWHFVDVVWLFLYVSI) traverse the membrane as a helical segment. Topologically, residues 257 to 261 (YWWGS) are mitochondrial intermembrane.

This sequence belongs to the cytochrome c oxidase subunit 3 family. As to quaternary structure, component of the cytochrome c oxidase (complex IV, CIV), a multisubunit enzyme composed of 14 subunits. The complex is composed of a catalytic core of 3 subunits MT-CO1, MT-CO2 and MT-CO3, encoded in the mitochondrial DNA, and 11 supernumerary subunits COX4I, COX5A, COX5B, COX6A, COX6B, COX6C, COX7A, COX7B, COX7C, COX8 and NDUFA4, which are encoded in the nuclear genome. The complex exists as a monomer or a dimer and forms supercomplexes (SCs) in the inner mitochondrial membrane with NADH-ubiquinone oxidoreductase (complex I, CI) and ubiquinol-cytochrome c oxidoreductase (cytochrome b-c1 complex, complex III, CIII), resulting in different assemblies (supercomplex SCI(1)III(2)IV(1) and megacomplex MCI(2)III(2)IV(2)).

It is found in the mitochondrion inner membrane. The catalysed reaction is 4 Fe(II)-[cytochrome c] + O2 + 8 H(+)(in) = 4 Fe(III)-[cytochrome c] + 2 H2O + 4 H(+)(out). Its function is as follows. Component of the cytochrome c oxidase, the last enzyme in the mitochondrial electron transport chain which drives oxidative phosphorylation. The respiratory chain contains 3 multisubunit complexes succinate dehydrogenase (complex II, CII), ubiquinol-cytochrome c oxidoreductase (cytochrome b-c1 complex, complex III, CIII) and cytochrome c oxidase (complex IV, CIV), that cooperate to transfer electrons derived from NADH and succinate to molecular oxygen, creating an electrochemical gradient over the inner membrane that drives transmembrane transport and the ATP synthase. Cytochrome c oxidase is the component of the respiratory chain that catalyzes the reduction of oxygen to water. Electrons originating from reduced cytochrome c in the intermembrane space (IMS) are transferred via the dinuclear copper A center (CU(A)) of subunit 2 and heme A of subunit 1 to the active site in subunit 1, a binuclear center (BNC) formed by heme A3 and copper B (CU(B)). The BNC reduces molecular oxygen to 2 water molecules using 4 electrons from cytochrome c in the IMS and 4 protons from the mitochondrial matrix. This Oncorhynchus clarkii (Cutthroat trout) protein is Cytochrome c oxidase subunit 3 (mt-co3).